We begin with the raw amino-acid sequence, 157 residues long: UPF0225 protein PSPPH_1399 (157 aa).

This sequence belongs to the UPF0225 family.

The protein is UPF0225 protein PSPPH_1399 of Pseudomonas savastanoi pv. phaseolicola (strain 1448A / Race 6) (Pseudomonas syringae pv. phaseolicola (strain 1448A / Race 6)).